The chain runs to 132 residues: Small ribosomal subunit protein uS8c (132 aa).

This sequence belongs to the universal ribosomal protein uS8 family. As to quaternary structure, part of the 30S ribosomal subunit.

It is found in the plastid. The protein resides in the chloroplast. In terms of biological role, one of the primary rRNA binding proteins, it binds directly to 16S rRNA central domain where it helps coordinate assembly of the platform of the 30S subunit. This is Small ribosomal subunit protein uS8c (rps8) from Spirogyra maxima (Green alga).